A 117-amino-acid polypeptide reads, in one-letter code: Mediator of RNA polymerase II transcription subunit 11 (117 aa).

At A2 the chain carries N-acetylalanine.

The protein belongs to the Mediator complex subunit 11 family. As to quaternary structure, component of the Mediator complex, which is composed of MED1, MED4, MED6, MED7, MED8, MED9, MED10, MED11, MED12, MED13, MED13L, MED14, MED15, MED16, MED17, MED18, MED19, MED20, MED21, MED22, MED23, MED24, MED25, MED26, MED27, MED29, MED30, MED31, CCNC, CDK8 and CDC2L6/CDK11. The MED12, MED13, CCNC and CDK8 subunits form a distinct module termed the CDK8 module. Mediator containing the CDK8 module is less active than Mediator lacking this module in supporting transcriptional activation. Individual preparations of the Mediator complex lacking one or more distinct subunits have been variously termed ARC, CRSP, DRIP, PC2, SMCC and TRAP. In terms of tissue distribution, expressed in cochlea.

The protein localises to the nucleus. In terms of biological role, component of the Mediator complex, a coactivator involved in the regulated transcription of nearly all RNA polymerase II-dependent genes. Mediator functions as a bridge to convey information from gene-specific regulatory proteins to the basal RNA polymerase II transcription machinery. Mediator is recruited to promoters by direct interactions with regulatory proteins and serves as a scaffold for the assembly of a functional pre-initiation complex with RNA polymerase II and the general transcription factors. The polypeptide is Mediator of RNA polymerase II transcription subunit 11 (Med11) (Mus musculus (Mouse)).